A 297-amino-acid polypeptide reads, in one-letter code: Protein MIZU-KUSSEI 1 (297 aa).

As to expression, expressed in root meristematic region, cortical cells, lateral root cap cells, columella cells of the root cap, mature region of the roots and leaf hydathodes.

The protein localises to the endoplasmic reticulum membrane. In terms of biological role, plays a role in lateral root development by maintaining auxin levels. This function requires GNOM (GN/MIZ2) activity. Negatively regulates cytokinin sensitivity on root development. Positively regulates hydrotropism in roots. This chain is Protein MIZU-KUSSEI 1 (MIZ1), found in Arabidopsis thaliana (Mouse-ear cress).